An 875-amino-acid chain; its full sequence is Metal transporter CNNM2 (875 aa).

Residues 1-250 (MIGCGACEPE…TKMIVGEEKK (250 aa)) are Extracellular-facing. N-linked (GlcNAc...) asparagine glycosylation occurs at asparagine 112. Residues 122–148 (EHERRRHTPGERGLGGPAPPEPDSGPQ) are disordered. Residues 251–271 (FLLPFWLQVIFISLLLCLSGM) form a helical membrane-spanning segment. The 181-residue stretch at 251-431 (FLLPFWLQVI…DPYNDLVKEE (181 aa)) folds into the CNNM transmembrane domain. Topologically, residues 272 to 313 (FSGLNLGLMALDPMELRIVQNCGTEKEKNYAKRIEPVRRQGN) are cytoplasmic. The helical intramembrane region spans 314 to 334 (YLLCSLLLGNVLVNTTLTILL). The Cytoplasmic portion of the chain corresponds to 335-338 (DDIA). Residues 339-359 (GSGLVAVVVSTIGIVIFGEIV) traverse the membrane as a helical segment. Topologically, residues 360-368 (PQAICSRHG) are extracellular. The helical transmembrane segment at 369-389 (LAVGANTIFLTKFFMMMTFPA) threads the bilayer. The Cytoplasmic segment spans residues 390-875 (SYPVSKLLDC…NHSLHSEGAI (486 aa)). CBS domains are found at residues 450-511 (MTPL…CTPL) and 518-584 (YNHP…ILDE). Residues 741–763 (AGSPGENKSPPRPCGLNHSDSLS) form a disordered region. Residue serine 761 is modified to Phosphoserine.

The protein belongs to the ACDP family.

Its subcellular location is the cell membrane. Its function is as follows. Divalent metal cation transporter. Mediates transport of divalent metal cations in an order of Mg(2+) &gt; Co(2+) &gt; Mn(2+) &gt; Sr(2+) &gt; Ba(2+) &gt; Cu(2+) &gt; Fe(2+). The protein is Metal transporter CNNM2 (Cnnm2) of Rattus norvegicus (Rat).